Reading from the N-terminus, the 66-residue chain is Toxin Tppa2 (66 aa).

In terms of domain architecture, LCN-type CS-alpha/beta spans Lys-1–Gly-63. 4 disulfides stabilise this stretch: Cys-11–Cys-62, Cys-15–Cys-37, Cys-23–Cys-43, and Cys-27–Cys-45. Position 62 is a cysteine amide (Cys-62).

Belongs to the long (4 C-C) scorpion toxin superfamily. Sodium channel inhibitor family. Beta subfamily. In terms of tissue distribution, expressed by the venom gland.

Its subcellular location is the secreted. Functionally, beta toxins bind voltage-independently at site-4 of sodium channels (Nav) and shift the voltage of activation toward more negative potentials thereby affecting sodium channel activation and promoting spontaneous and repetitive firing. The polypeptide is Toxin Tppa2 (Tityus pachyurus (Colombian scorpion)).